We begin with the raw amino-acid sequence, 483 residues long: AP-3 complex subunit mu (483 aa).

The region spanning 211 to 482 (NNELYVDLLE…KTQTGNFQVR (272 aa)) is the MHD domain.

It belongs to the adaptor complexes medium subunit family. Adaptor protein complex 3 (AP-3) is a heterotetramer composed of 2 large adaptins (APL5 and APL6), a medium adaptin (APM3) and a small adaptin (APS3).

Its subcellular location is the golgi apparatus. It is found in the cytoplasmic vesicle membrane. Functionally, part of the AP-3 complex, an adaptor-related complex which is not clathrin-associated. The complex is associated with the Golgi region as well as more peripheral structures. It facilitates the budding of vesicles from the Golgi membrane and may be directly involved in trafficking to the vacuole. Required for the transport via the ALP pathway, which directs the transport of the cargo proteins PHO8 and VAM3 to the vacuole. The chain is AP-3 complex subunit mu (APM3) from Saccharomyces cerevisiae (strain ATCC 204508 / S288c) (Baker's yeast).